The primary structure comprises 75 residues: Translational regulator CsrA (75 aa).

Belongs to the CsrA/RsmA family. As to quaternary structure, homodimer; the beta-strands of each monomer intercalate to form a hydrophobic core, while the alpha-helices form wings that extend away from the core.

The protein localises to the cytoplasm. Its function is as follows. A translational regulator that binds mRNA to regulate translation initiation and/or mRNA stability. Usually binds in the 5'-UTR at or near the Shine-Dalgarno sequence preventing ribosome-binding, thus repressing translation. Its main target seems to be the major flagellin gene, while its function is anatagonized by FliW. The chain is Translational regulator CsrA from Exiguobacterium sp. (strain ATCC BAA-1283 / AT1b).